A 299-amino-acid chain; its full sequence is J domain-containing protein CG6693 (299 aa).

Residues 15-82 (DVYKLMELAR…QKRALYDEQG (68 aa)) enclose the J domain. The residue at position 239 (serine 239) is a Phosphoserine. Residues 266 to 299 (FEKKKKKSKKPAAKQETKPKLNGVKAGRVEKGKN) form a disordered region. Residues 268–277 (KKKKKSKKPA) show a composition bias toward basic residues.

In Drosophila melanogaster (Fruit fly), this protein is J domain-containing protein CG6693.